The sequence spans 231 residues: MSEIKDVIVQGLWKNNSALVQLLGLCPLLAVTSTATNALGLGLATTLVLTLTNLTISTLRHWTPAEIRIPIYVMIIASVVSAVQMLINAYAFGLYQSLGIFIPLIVTNCIVVGRAEAFAAKKGPALSALDGFSIGMGATCAMFVLGSLREIIGNGTLFDGADALLGSWAKVLRVEIFRTDSPFLLAMLPPGAFIGLGLMLAGKYLIDEKMKKRRTEAVAERALPNGETGNV.

The next 6 helical transmembrane spans lie at 18 to 38, 39 to 59, 63 to 83, 86 to 106, 125 to 145, and 182 to 202; these read ALVQLLGLCPLLAVTSTATNA, LGLGLATTLVLTLTNLTISTL, TPAEIRIPIYVMIIASVVSAV, LINAYAFGLYQSLGIFIPLIV, ALSALDGFSIGMGATCAMFVL, and PFLLAMLPPGAFIGLGLMLAG.

Belongs to the NqrDE/RnfAE family. The complex is composed of six subunits: RsxA, RsxB, RsxC, RsxD, RsxE and RsxG.

Its subcellular location is the cell inner membrane. Functionally, part of a membrane-bound complex that couples electron transfer with translocation of ions across the membrane. Required to maintain the reduced state of SoxR. The polypeptide is Ion-translocating oxidoreductase complex subunit E (Escherichia coli O1:K1 / APEC).